We begin with the raw amino-acid sequence, 347 residues long: Ketol-acid reductoisomerase (NADP(+)) (347 aa).

Residues 3–182 (TKMFYDKDID…GSGRAGILET (180 aa)) enclose the KARI N-terminal Rossmann domain. Residues 26-29 (YGAQ), R49, S53, and 83-86 (DELQ) each bind NADP(+). H108 is an active-site residue. G134 is a binding site for NADP(+). The 146-residue stretch at 183 to 328 (TFEEETTEDL…KKVRAMMPWI (146 aa)) folds into the KARI C-terminal knotted domain. The Mg(2+) site is built by D191, E195, E227, and E231. Substrate is bound at residue S252.

The protein belongs to the ketol-acid reductoisomerase family. It depends on Mg(2+) as a cofactor.

It catalyses the reaction (2R)-2,3-dihydroxy-3-methylbutanoate + NADP(+) = (2S)-2-acetolactate + NADPH + H(+). The enzyme catalyses (2R,3R)-2,3-dihydroxy-3-methylpentanoate + NADP(+) = (S)-2-ethyl-2-hydroxy-3-oxobutanoate + NADPH + H(+). It participates in amino-acid biosynthesis; L-isoleucine biosynthesis; L-isoleucine from 2-oxobutanoate: step 2/4. It functions in the pathway amino-acid biosynthesis; L-valine biosynthesis; L-valine from pyruvate: step 2/4. Its function is as follows. Involved in the biosynthesis of branched-chain amino acids (BCAA). Catalyzes an alkyl-migration followed by a ketol-acid reduction of (S)-2-acetolactate (S2AL) to yield (R)-2,3-dihydroxy-isovalerate. In the isomerase reaction, S2AL is rearranged via a Mg-dependent methyl migration to produce 3-hydroxy-3-methyl-2-ketobutyrate (HMKB). In the reductase reaction, this 2-ketoacid undergoes a metal-dependent reduction by NADPH to yield (R)-2,3-dihydroxy-isovalerate. This Leuconostoc mesenteroides subsp. mesenteroides (strain ATCC 8293 / DSM 20343 / BCRC 11652 / CCM 1803 / JCM 6124 / NCDO 523 / NBRC 100496 / NCIMB 8023 / NCTC 12954 / NRRL B-1118 / 37Y) protein is Ketol-acid reductoisomerase (NADP(+)).